A 136-amino-acid chain; its full sequence is Large ribosomal subunit protein eL27B (136 aa).

This sequence belongs to the eukaryotic ribosomal protein eL27 family. In terms of assembly, component of the large ribosomal subunit (LSU). Mature yeast ribosomes consist of a small (40S) and a large (60S) subunit. The 40S small subunit contains 1 molecule of ribosomal RNA (18S rRNA) and at least 33 different proteins. The large 60S subunit contains 3 rRNA molecules (25S, 5.8S and 5S rRNA) and at least 46 different proteins.

It localises to the cytoplasm. Component of the ribosome, a large ribonucleoprotein complex responsible for the synthesis of proteins in the cell. The small ribosomal subunit (SSU) binds messenger RNAs (mRNAs) and translates the encoded message by selecting cognate aminoacyl-transfer RNA (tRNA) molecules. The large subunit (LSU) contains the ribosomal catalytic site termed the peptidyl transferase center (PTC), which catalyzes the formation of peptide bonds, thereby polymerizing the amino acids delivered by tRNAs into a polypeptide chain. The nascent polypeptides leave the ribosome through a tunnel in the LSU and interact with protein factors that function in enzymatic processing, targeting, and the membrane insertion of nascent chains at the exit of the ribosomal tunnel. The chain is Large ribosomal subunit protein eL27B (rpl2702) from Schizosaccharomyces pombe (strain 972 / ATCC 24843) (Fission yeast).